Consider the following 396-residue polypeptide: Probable sugar efflux transporter (396 aa).

Transmembrane regions (helical) follow at residues 15 to 35 (VVTLAVAAFIFNTTEFVPVGL), 50 to 70 (VGIMLTIYAWVVALMSLPFML), 81 to 101 (LICLFVVFIASHVLSFLSWSF), 103 to 123 (VLVISRIGVAFAHAIFWSITA), 136 to 156 (AQALSLIATGTALAMVLGLPL), 170 to 190 (FFAIGIGALITLLCLIKLLPL), 209 to 229 (PALMSIYLLTVVVVTAHYTAY), 246 to 266 (FATALLLLLGGAGIIGSVIFG), 275 to 295 (ALVSTAIALLLVCLALLLPAA), 299 to 319 (IHLGVLSIFWGIAMMIIGLGM), 333 to 353 (VAMALFSGIFNIGIGAGALVG), and 364 to 384 (MIGYVGAVPAFAALIWSIIIF).

Belongs to the major facilitator superfamily. SotB (TC 2.A.1.2) family.

Its subcellular location is the cell inner membrane. Its function is as follows. Involved in the efflux of sugars. The physiological role may be the reduction of the intracellular concentration of toxic sugars or sugar metabolites. The polypeptide is Probable sugar efflux transporter (Escherichia coli O127:H6 (strain E2348/69 / EPEC)).